Consider the following 162-residue polypeptide: NADH-quinone oxidoreductase subunit I (162 aa).

4Fe-4S ferredoxin-type domains lie at 52 to 82 (LRRY…IEAG) and 93 to 122 (VRYD…EGPN). [4Fe-4S] cluster-binding residues include Cys-62, Cys-65, Cys-68, Cys-72, Cys-102, Cys-105, Cys-108, and Cys-112.

It belongs to the complex I 23 kDa subunit family. As to quaternary structure, NDH-1 is composed of 14 different subunits. Subunits NuoA, H, J, K, L, M, N constitute the membrane sector of the complex. It depends on [4Fe-4S] cluster as a cofactor.

It localises to the cell inner membrane. It catalyses the reaction a quinone + NADH + 5 H(+)(in) = a quinol + NAD(+) + 4 H(+)(out). Functionally, NDH-1 shuttles electrons from NADH, via FMN and iron-sulfur (Fe-S) centers, to quinones in the respiratory chain. The immediate electron acceptor for the enzyme in this species is believed to be ubiquinone. Couples the redox reaction to proton translocation (for every two electrons transferred, four hydrogen ions are translocated across the cytoplasmic membrane), and thus conserves the redox energy in a proton gradient. In Nitrobacter hamburgensis (strain DSM 10229 / NCIMB 13809 / X14), this protein is NADH-quinone oxidoreductase subunit I.